The following is a 163-amino-acid chain: MKLNEIADNEGSRKKRTRVGRGIGSGKGKQSGRGGKGQTARSGVRIKGFEGGQMPLHRRLPKRGFNNIFRVELSEVNLDRLQDAIDAKKLDASATINAEALVKSGVLRRAKGGVRLLGRGELKSKVAIEVHGATKSAIEAVEKAGGSVKILAPKKDEGEAKAS.

The segment at 1 to 43 (MKLNEIADNEGSRKKRTRVGRGIGSGKGKQSGRGGKGQTARSG) is disordered. Residues 21–37 (RGIGSGKGKQSGRGGKG) show a composition bias toward gly residues.

It belongs to the universal ribosomal protein uL15 family. In terms of assembly, part of the 50S ribosomal subunit.

Its function is as follows. Binds to the 23S rRNA. The protein is Large ribosomal subunit protein uL15 of Afipia carboxidovorans (strain ATCC 49405 / DSM 1227 / KCTC 32145 / OM5) (Oligotropha carboxidovorans).